The chain runs to 302 residues: NAD kinase 1 (302 aa).

The active-site Proton acceptor is the aspartate 67. NAD(+)-binding positions include 67–68 (DG), arginine 72, 148–149 (ND), lysine 178, and aspartate 180.

The protein belongs to the NAD kinase family. It depends on a divalent metal cation as a cofactor.

It localises to the cytoplasm. The enzyme catalyses NAD(+) + ATP = ADP + NADP(+) + H(+). Functionally, involved in the regulation of the intracellular balance of NAD and NADP, and is a key enzyme in the biosynthesis of NADP. Catalyzes specifically the phosphorylation on 2'-hydroxyl of the adenosine moiety of NAD to yield NADP. The chain is NAD kinase 1 from Prochlorococcus marinus (strain NATL2A).